The following is a 276-amino-acid chain: Transmembrane protein 45B (276 aa).

6 helical membrane-spanning segments follow: residues 7–27 (HALP…KYPL), 48–68 (IIEA…EQFV), 95–115 (LFFA…HVPL), 147–167 (IHSL…VEVV), 181–201 (LLLL…PPFG), and 213–233 (IMFV…ILAA). A phosphoserine mark is found at serine 271 and serine 273.

This sequence belongs to the TMEM45 family.

It is found in the endosome membrane. It localises to the lysosome membrane. Its subcellular location is the golgi apparatus. The protein localises to the trans-Golgi network membrane. Plays a role in innate immunity. This Bos taurus (Bovine) protein is Transmembrane protein 45B (TMEM45B).